The chain runs to 208 residues: Large ribosomal subunit protein bL25 (208 aa).

Residues 184-208 (VTISGTSSDQDTSGGESSGTTTSED) are disordered. Positions 187 to 208 (SGTSSDQDTSGGESSGTTTSED) are enriched in low complexity.

The protein belongs to the bacterial ribosomal protein bL25 family. CTC subfamily. As to quaternary structure, part of the 50S ribosomal subunit; part of the 5S rRNA/L5/L18/L25 subcomplex. Contacts the 5S rRNA. Binds to the 5S rRNA independently of L5 and L18.

Its function is as follows. This is one of the proteins that binds to the 5S RNA in the ribosome where it forms part of the central protuberance. This Ehrlichia ruminantium (strain Gardel) protein is Large ribosomal subunit protein bL25.